The following is a 259-amino-acid chain: Glutamate racemase (259 aa).

Substrate-binding positions include 12–13 and 44–45; these read DS and YG. Residue C75 is the Proton donor/acceptor of the active site. Substrate is bound at residue 76-77; it reads NT. C186 acts as the Proton donor/acceptor in catalysis. Residue 187-188 participates in substrate binding; sequence TH.

It belongs to the aspartate/glutamate racemases family.

It carries out the reaction L-glutamate = D-glutamate. The protein operates within cell wall biogenesis; peptidoglycan biosynthesis. Provides the (R)-glutamate required for cell wall biosynthesis. The protein is Glutamate racemase of Clostridium novyi (strain NT).